We begin with the raw amino-acid sequence, 820 residues long: Leucine--tRNA ligase (820 aa).

The 'HIGH' region motif lies at 42–52 (PYPSGDLHMGH). The short motif at 576–580 (KMSKS) is the 'KMSKS' region element. Residue Lys-579 coordinates ATP.

The protein belongs to the class-I aminoacyl-tRNA synthetase family.

Its subcellular location is the cytoplasm. The catalysed reaction is tRNA(Leu) + L-leucine + ATP = L-leucyl-tRNA(Leu) + AMP + diphosphate. The sequence is that of Leucine--tRNA ligase from Coxiella burnetii (strain RSA 493 / Nine Mile phase I).